Consider the following 692-residue polypeptide: Elongation factor G (692 aa).

One can recognise a tr-type G domain in the interval 8-282; it reads AKTRNIGIMA…AVIAYLPSPL (275 aa). Residues 17-24, 81-85, and 135-138 each bind GTP; these read AHVDAGKT, DTPGH, and NKMD.

Belongs to the TRAFAC class translation factor GTPase superfamily. Classic translation factor GTPase family. EF-G/EF-2 subfamily.

Its subcellular location is the cytoplasm. Functionally, catalyzes the GTP-dependent ribosomal translocation step during translation elongation. During this step, the ribosome changes from the pre-translocational (PRE) to the post-translocational (POST) state as the newly formed A-site-bound peptidyl-tRNA and P-site-bound deacylated tRNA move to the P and E sites, respectively. Catalyzes the coordinated movement of the two tRNA molecules, the mRNA and conformational changes in the ribosome. This chain is Elongation factor G, found in Streptococcus equi subsp. equi (strain 4047).